The following is a 465-amino-acid chain: Cysteine--tRNA ligase (465 aa).

C29 serves as a coordination point for Zn(2+). The short motif at 31–41 (PTVYNYIHIGN) is the 'HIGH' region element. Residues C209, H234, and E238 each coordinate Zn(2+). The short motif at 266–270 (KMSKS) is the 'KMSKS' region element. K269 contacts ATP. Phosphoserine is present on S270.

Belongs to the class-I aminoacyl-tRNA synthetase family. As to quaternary structure, monomer. Requires Zn(2+) as cofactor.

The protein resides in the cytoplasm. The enzyme catalyses tRNA(Cys) + L-cysteine + ATP = L-cysteinyl-tRNA(Cys) + AMP + diphosphate. This Bacillus thuringiensis (strain Al Hakam) protein is Cysteine--tRNA ligase.